Consider the following 297-residue polypeptide: Ribosomal protein L11 methyltransferase (297 aa).

Positions 152, 173, 195, and 234 each coordinate S-adenosyl-L-methionine.

The protein belongs to the methyltransferase superfamily. PrmA family.

The protein localises to the cytoplasm. It carries out the reaction L-lysyl-[protein] + 3 S-adenosyl-L-methionine = N(6),N(6),N(6)-trimethyl-L-lysyl-[protein] + 3 S-adenosyl-L-homocysteine + 3 H(+). Methylates ribosomal protein L11. This chain is Ribosomal protein L11 methyltransferase, found in Cupriavidus taiwanensis (strain DSM 17343 / BCRC 17206 / CCUG 44338 / CIP 107171 / LMG 19424 / R1) (Ralstonia taiwanensis (strain LMG 19424)).